A 69-amino-acid polypeptide reads, in one-letter code: ATP synthase protein 8 (69 aa).

A helical membrane pass occupies residues 8 to 24 (TWTLTISLMIISLFCIY). Position 55 is an N6-acetyllysine; alternate (K55). An N6-succinyllysine; alternate modification is found at K55. K58 is subject to N6-acetyllysine.

Belongs to the ATPase protein 8 family. F-type ATPases have 2 components, CF(1) - the catalytic core - and CF(0) - the membrane proton channel. Component of an ATP synthase complex composed of ATP5PB, ATP5MC1, ATP5F1E, ATP5PD, ATP5ME, ATP5PF, ATP5MF, MT-ATP6, MT-ATP8, ATP5F1A, ATP5F1B, ATP5F1D, ATP5F1C, ATP5PO, ATP5MG, ATP5MK and ATP5MJ. Interacts with PRICKLE3.

It is found in the mitochondrion membrane. Its function is as follows. Mitochondrial membrane ATP synthase (F(1)F(0) ATP synthase or Complex V) produces ATP from ADP in the presence of a proton gradient across the membrane which is generated by electron transport complexes of the respiratory chain. F-type ATPases consist of two structural domains, F(1) - containing the extramembraneous catalytic core and F(0) - containing the membrane proton channel, linked together by a central stalk and a peripheral stalk. During catalysis, ATP synthesis in the catalytic domain of F(1) is coupled via a rotary mechanism of the central stalk subunits to proton translocation. Part of the complex F(0) domain. Minor subunit located with subunit a in the membrane. The polypeptide is ATP synthase protein 8 (MT-ATP8) (Didelphis virginiana (North American opossum)).